We begin with the raw amino-acid sequence, 548 residues long: Cleavage and polyadenylation specificity factor subunit 6 (548 aa).

In terms of domain architecture, RRM spans 81 to 161 (IALYIGNLTW…QKPIVTPCNK (81 aa)). Residues 169-180 (MQSRKTATQAGQ) show a composition bias toward polar residues. 2 disordered regions span residues 169–401 (MQSR…MDVV) and 473–548 (LHGI…YRHR). Composition is skewed to pro residues over residues 221–279 (PAGP…PPVM), 294–362 (PPGP…PPPG), and 373–384 (GPPPSDPYGRPP). Basic and acidic residues-rich tracts occupy residues 385–400 (PYER…DMDV) and 490–500 (RSRERDHSRSR). The span at 501–511 (EKSRRHKSRSR) shows a compositional bias: basic residues. The segment covering 512–548 (DRHDDYYRERSRERERHRDRERDRDRERDREREYRHR) has biased composition (basic and acidic residues).

This sequence belongs to the RRM CPSF6/7 family. As to quaternary structure, component of the cleavage factor Im (CFIm) complex.

The protein resides in the nucleus. It is found in the nucleoplasm. The protein localises to the nucleus speckle. Its subcellular location is the cytoplasm. In terms of biological role, component of the cleavage factor Im (CFIm) complex that functions as an activator of the pre-mRNA 3'-end cleavage and polyadenylation processing required for the maturation of pre-mRNA into functional mRNAs. CFIm contributes to the recruitment of multiprotein complexes on specific sequences on the pre-mRNA 3'-end, so called cleavage and polyadenylation signals (pA signals). Most pre-mRNAs contain multiple pA signals, resulting in alternative cleavage and polyadenylation (APA) producing mRNAs with variable 3'-end formation. The CFIm complex acts as a key regulator of cleavage and polyadenylation site choice during APA through its binding to 5'-UGUA-3' elements localized in the 3'-untranslated region (UTR) for a huge number of pre-mRNAs. Plays a role in mRNA export. The chain is Cleavage and polyadenylation specificity factor subunit 6 from Xenopus laevis (African clawed frog).